A 649-amino-acid polypeptide reads, in one-letter code: Acetyl-coenzyme A synthetase (649 aa).

CoA is bound by residues 191-194 (RAGR), threonine 311, and asparagine 335. Residues 387–389 (GEP), 411–416 (DTWWQT), aspartate 500, and arginine 515 each bind ATP. Serine 523 contacts CoA. ATP is bound at residue arginine 526. Mg(2+)-binding residues include valine 537, phenylalanine 539, and isoleucine 542. Arginine 584 contacts CoA. Lysine 609 is subject to N6-acetyllysine.

It belongs to the ATP-dependent AMP-binding enzyme family. It depends on Mg(2+) as a cofactor. In terms of processing, acetylated. Deacetylation by the SIR2-homolog deacetylase activates the enzyme.

The enzyme catalyses acetate + ATP + CoA = acetyl-CoA + AMP + diphosphate. In terms of biological role, catalyzes the conversion of acetate into acetyl-CoA (AcCoA), an essential intermediate at the junction of anabolic and catabolic pathways. AcsA undergoes a two-step reaction. In the first half reaction, AcsA combines acetate with ATP to form acetyl-adenylate (AcAMP) intermediate. In the second half reaction, it can then transfer the acetyl group from AcAMP to the sulfhydryl group of CoA, forming the product AcCoA. The protein is Acetyl-coenzyme A synthetase of Photobacterium profundum (strain SS9).